The following is a 65-amino-acid chain: Large ribosomal subunit protein bL33c (65 aa).

Belongs to the bacterial ribosomal protein bL33 family.

It is found in the plastid. The protein localises to the chloroplast. The sequence is that of Large ribosomal subunit protein bL33c from Pyropia yezoensis (Susabi-nori).